The primary structure comprises 300 residues: Acetylglutamate kinase (300 aa).

Substrate-binding positions include 72-73, arginine 94, and asparagine 197; that span reads GG.

Belongs to the acetylglutamate kinase family. ArgB subfamily.

The protein resides in the cytoplasm. The enzyme catalyses N-acetyl-L-glutamate + ATP = N-acetyl-L-glutamyl 5-phosphate + ADP. It participates in amino-acid biosynthesis; L-arginine biosynthesis; N(2)-acetyl-L-ornithine from L-glutamate: step 2/4. Catalyzes the ATP-dependent phosphorylation of N-acetyl-L-glutamate. In Azoarcus sp. (strain BH72), this protein is Acetylglutamate kinase.